The following is a 491-amino-acid chain: Stromelysin-3 (491 aa).

The signal sequence occupies residues 1–35 (MARAACLLRAISRALLLPLPLLLLLLLLLPPQLMA). The propeptide at 36–101 (RARPPENHRH…VLNARNRQKR (66 aa)) is activation peptide. Residues 82–89 (LRCGVPDP) carry the Cysteine switch motif. Residues cysteine 84, histidine 168, and aspartate 170 each coordinate Zn(2+). Aspartate 175, glycine 176, glycine 178, and isoleucine 180 together coordinate Ca(2+). Zn(2+)-binding residues include histidine 183, histidine 196, and histidine 218. The active site involves glutamate 219. Histidine 222 and histidine 228 together coordinate Zn(2+). Positions 260-279 (YGRPQLTPTSPTPTLSSQAG) are disordered. The span at 263–277 (PQLTPTSPTPTLSSQ) shows a compositional bias: low complexity. The cysteines at positions 297 and 483 are disulfide-linked. Hemopexin repeat units follow at residues 298-342 (ETSF…WQGL), 343-385 (PSPV…KLGL), 387-435 (GSPV…WRGV), and 436-483 (PSEI…FFDC).

It belongs to the peptidase M10A family. Requires Ca(2+) as cofactor. The cofactor is Zn(2+). In terms of processing, the precursor is cleaved by a furin endopeptidase. As to expression, highly expressed in ovary and uterus.

It is found in the secreted. It localises to the extracellular space. The protein resides in the extracellular matrix. Its function is as follows. May play an important role in the progression of epithelial malignancies. This is Stromelysin-3 (Mmp11) from Rattus norvegicus (Rat).